The sequence spans 475 residues: Putative UDP-glucose glucosyltransferase (475 aa).

It belongs to the UDP-glycosyltransferase family.

This chain is Putative UDP-glucose glucosyltransferase, found in Fragaria ananassa (Strawberry).